A 193-amino-acid polypeptide reads, in one-letter code: Ion-translocating oxidoreductase complex subunit A (193 aa).

The next 6 membrane-spanning stretches (helical) occupy residues Phe4–Gly24, Ile39–Val59, Phe71–Val91, Ala102–Met122, Thr134–Met154, and Pro171–Val191.

The protein belongs to the NqrDE/RnfAE family. As to quaternary structure, the complex is composed of six subunits: RnfA, RnfB, RnfC, RnfD, RnfE and RnfG.

It localises to the cellular chromatophore membrane. Functionally, part of a membrane-bound complex that couples electron transfer with translocation of ions across the membrane. Required for nitrogen fixation. Involved in electron transfer to nitrogenase. The protein is Ion-translocating oxidoreductase complex subunit A of Rhodobacter capsulatus (Rhodopseudomonas capsulata).